The following is a 224-amino-acid chain: Pyridoxal 5'-phosphate synthase subunit PdxT (224 aa).

G55 to S57 is a binding site for L-glutamine. The active-site Nucleophile is C87. L-glutamine is bound by residues R113 and I142 to R143. Catalysis depends on charge relay system residues H178 and E180.

It belongs to the glutaminase PdxT/SNO family. As to quaternary structure, in the presence of PdxS, forms a dodecamer of heterodimers. Only shows activity in the heterodimer.

The catalysed reaction is aldehydo-D-ribose 5-phosphate + D-glyceraldehyde 3-phosphate + L-glutamine = pyridoxal 5'-phosphate + L-glutamate + phosphate + 3 H2O + H(+). The enzyme catalyses L-glutamine + H2O = L-glutamate + NH4(+). The protein operates within cofactor biosynthesis; pyridoxal 5'-phosphate biosynthesis. Its function is as follows. Catalyzes the hydrolysis of glutamine to glutamate and ammonia as part of the biosynthesis of pyridoxal 5'-phosphate. The resulting ammonia molecule is channeled to the active site of PdxS. This chain is Pyridoxal 5'-phosphate synthase subunit PdxT, found in Syntrophus aciditrophicus (strain SB).